A 420-amino-acid chain; its full sequence is Pre-mRNA-splicing factor RBM22 (420 aa).

Ala-2 carries the post-translational modification N-acetylalanine. Residues Ser-4 and Ser-102 each carry the phosphoserine modification. Residues Lys-139 and Lys-149 each participate in a glycyl lysine isopeptide (Lys-Gly) (interchain with G-Cter in SUMO2) cross-link. The segment at 159–186 adopts a C3H1-type zinc-finger fold; the sequence is RNRPHICSFWVKGECKRGEECPYRHEKP. Lys-212 is subject to N6-acetyllysine. The region spanning 232–305 is the RRM domain; that stretch reads TTLYVGGLGD…RRLNVKWGRS (74 aa). A Glycyl lysine isopeptide (Lys-Gly) (interchain with G-Cter in SUMO2) cross-link involves residue Lys-290. Disordered stretches follow at residues 303–343 and 372–420; these read GRSQ…AAEE and APPP…HSSP. Positions 309–318 are enriched in basic and acidic residues; sequence RGKEKEKDGT.

It belongs to the SLT11 family. Component of the pre-catalytic and catalytic spliceosome complexes. Component of the postcatalytic spliceosome P complex. Interacts with PDCD6; the interaction induces translocation of PDCD6 in the cytoplasm. Interacts with PPIL1.

Its subcellular location is the nucleus. The protein localises to the cytoplasm. In terms of biological role, required for pre-mRNA splicing as component of the activated spliceosome. Involved in the first step of pre-mRNA splicing. Binds directly to the internal stem-loop (ISL) domain of the U6 snRNA and to the pre-mRNA intron near the 5' splice site during the activation and catalytic phases of the spliceosome cycle. Involved in both translocations of the nuclear SLU7 to the cytoplasm and the cytosolic calcium-binding protein PDCD6 to the nucleus upon cellular stress responses. This chain is Pre-mRNA-splicing factor RBM22 (RBM22), found in Bos taurus (Bovine).